The chain runs to 396 residues: S-adenosylmethionine synthase (396 aa).

An ATP-binding site is contributed by histidine 16. Mg(2+) is bound at residue aspartate 18. Glutamate 44 contributes to the K(+) binding site. The L-methionine site is built by glutamate 57 and glutamine 100. The flexible loop stretch occupies residues 100–110 (QSVDIAQGVDR). ATP-binding positions include 165 to 167 (DAK), aspartate 240, 246 to 247 (RK), alanine 263, and lysine 267. Aspartate 240 contributes to the L-methionine binding site. Lysine 271 serves as a coordination point for L-methionine.

This sequence belongs to the AdoMet synthase family. As to quaternary structure, homotetramer; dimer of dimers. Requires Mg(2+) as cofactor. The cofactor is K(+).

It is found in the cytoplasm. The catalysed reaction is L-methionine + ATP + H2O = S-adenosyl-L-methionine + phosphate + diphosphate. It participates in amino-acid biosynthesis; S-adenosyl-L-methionine biosynthesis; S-adenosyl-L-methionine from L-methionine: step 1/1. Functionally, catalyzes the formation of S-adenosylmethionine (AdoMet) from methionine and ATP. The overall synthetic reaction is composed of two sequential steps, AdoMet formation and the subsequent tripolyphosphate hydrolysis which occurs prior to release of AdoMet from the enzyme. In Pseudomonas putida (strain W619), this protein is S-adenosylmethionine synthase.